We begin with the raw amino-acid sequence, 465 residues long: UDP-N-acetylmuramate--L-alanine ligase (465 aa).

115-121 (GAHGKTT) provides a ligand contact to ATP.

The protein belongs to the MurCDEF family.

The protein localises to the cytoplasm. The enzyme catalyses UDP-N-acetyl-alpha-D-muramate + L-alanine + ATP = UDP-N-acetyl-alpha-D-muramoyl-L-alanine + ADP + phosphate + H(+). It functions in the pathway cell wall biogenesis; peptidoglycan biosynthesis. Cell wall formation. In Coxiella burnetii (strain CbuK_Q154) (Coxiella burnetii (strain Q154)), this protein is UDP-N-acetylmuramate--L-alanine ligase.